Here is a 117-residue protein sequence, read N- to C-terminus: Large ribosomal subunit protein bL19 (117 aa).

Belongs to the bacterial ribosomal protein bL19 family.

Its function is as follows. This protein is located at the 30S-50S ribosomal subunit interface and may play a role in the structure and function of the aminoacyl-tRNA binding site. This is Large ribosomal subunit protein bL19 from Photorhabdus laumondii subsp. laumondii (strain DSM 15139 / CIP 105565 / TT01) (Photorhabdus luminescens subsp. laumondii).